Consider the following 203-residue polypeptide: MSRYRGPRLKIVRRLGDLPGFTNKIQKRQASTQNKGKKTAKKRLSQYSIRLQEKQKLRYNYGVTERQLLLYVRKARRIKGSTGQILLQQLEMRLDNIIYRLGMAPTIANARQLVNHGHIVVNDRIVTIPSYRCKPKDIISVRNNSTSRNVITNNLSFSDSRLPPHLSFKKESLVALVNGLVDRQWIPLNINELLVVEYYSRMA.

One can recognise an S4 RNA-binding domain in the interval 92–150 (MRLDNIIYRLGMAPTIANARQLVNHGHIVVNDRIVTIPSYRCKPKDIISVRNNSTSRNV).

It belongs to the universal ribosomal protein uS4 family. As to quaternary structure, part of the 30S ribosomal subunit. Contacts protein S5. The interaction surface between S4 and S5 is involved in control of translational fidelity.

The protein localises to the plastid. The protein resides in the chloroplast. Functionally, one of the primary rRNA binding proteins, it binds directly to 16S rRNA where it nucleates assembly of the body of the 30S subunit. Its function is as follows. With S5 and S12 plays an important role in translational accuracy. This Chlorokybus atmophyticus (Soil alga) protein is Small ribosomal subunit protein uS4c (rps4).